The sequence spans 143 residues: Large ribosomal subunit protein uL11 (143 aa).

This sequence belongs to the universal ribosomal protein uL11 family. As to quaternary structure, part of the ribosomal stalk of the 50S ribosomal subunit. Interacts with L10 and the large rRNA to form the base of the stalk. L10 forms an elongated spine to which L12 dimers bind in a sequential fashion forming a multimeric L10(L12)X complex. Post-translationally, one or more lysine residues are methylated.

In terms of biological role, forms part of the ribosomal stalk which helps the ribosome interact with GTP-bound translation factors. The chain is Large ribosomal subunit protein uL11 from Cupriavidus pinatubonensis (strain JMP 134 / LMG 1197) (Cupriavidus necator (strain JMP 134)).